Here is a 231-residue protein sequence, read N- to C-terminus: Thrombin-like enzyme leucurobin (231 aa).

Residues 1-223 form the Peptidase S1 domain; sequence VIGGDECDIN…YLPWIQSIIA (223 aa). 6 disulfides stabilise this stretch: C7–C139, C26–C42, C74–C230, C118–C184, C150–C163, and C174–C199. Active-site charge relay system residues include H41 and D86. An N-linked (GlcNAc...) asparagine glycan is attached at N146. S178 acts as the Charge relay system in catalysis. N225 carries N-linked (GlcNAc...) asparagine glycosylation.

Belongs to the peptidase S1 family. Snake venom subfamily. As to quaternary structure, monomer. In terms of processing, glycosylated. In terms of tissue distribution, expressed by the venom gland.

It localises to the secreted. The enzyme catalyses Selective cleavage of Arg-|-Xaa bond in fibrinogen, to form fibrin, and release fibrinopeptide A. The specificity of further degradation of fibrinogen varies with species origin of the enzyme.. With respect to regulation, inhibited by PMSF and benzamidine. Its clotting effect is strongly inhibited by antibothropic serum. Is not inhibited by heparin. In terms of biological role, thrombin-like snake venom serine protease that cleaves Arg-Gly bonds in alpha-chain of fibrinogen (FGA). Induces temporary episodes of opisthotonos and rapid rolling around the long axis of the animal (gyroxin-like effect), when injected into the tail veins of mice (0.143 ug/g mouse). This Bothrops leucurus (Whitetail lancehead) protein is Thrombin-like enzyme leucurobin.